Reading from the N-terminus, the 268-residue chain is Tryptophan synthase alpha chain (268 aa).

Residues Glu-49 and Asp-60 each act as proton acceptor in the active site.

Belongs to the TrpA family. Tetramer of two alpha and two beta chains.

The catalysed reaction is (1S,2R)-1-C-(indol-3-yl)glycerol 3-phosphate + L-serine = D-glyceraldehyde 3-phosphate + L-tryptophan + H2O. It participates in amino-acid biosynthesis; L-tryptophan biosynthesis; L-tryptophan from chorismate: step 5/5. Functionally, the alpha subunit is responsible for the aldol cleavage of indoleglycerol phosphate to indole and glyceraldehyde 3-phosphate. The sequence is that of Tryptophan synthase alpha chain from Vibrio metschnikovii.